Consider the following 606-residue polypeptide: Sulfite reductase [NADPH] flavoprotein alpha-component (606 aa).

In terms of domain architecture, Flavodoxin-like spans 68–206; the sequence is ITILSASQTG…AAEAWRKEVT (139 aa). Residues 74–79, 121–124, and 157–166 contribute to the FMN site; these read SQTGNA, STQG, and LGDITYEHFA. The 215-residue stretch at 240 to 454 folds into the FAD-binding FR-type domain; the sequence is ESPLTATLSV…VEHNDNFRLP (215 aa). Residues threonine 328, glutamine 362, 392–395, 410–412, tyrosine 416, and 425–428 contribute to the FAD site; these read RLYS, TVG, and GGAS. NADP(+) is bound by residues 525–526, 531–535, and aspartate 568; these read SR and KVYVQ. Tyrosine 606 lines the FAD pocket.

The protein belongs to the NADPH-dependent sulphite reductase flavoprotein subunit CysJ family. In the N-terminal section; belongs to the flavodoxin family. It in the C-terminal section; belongs to the flavoprotein pyridine nucleotide cytochrome reductase family. In terms of assembly, alpha(8)-beta(8). The alpha component is a flavoprotein, the beta component is a hemoprotein. FAD is required as a cofactor. It depends on FMN as a cofactor.

It catalyses the reaction hydrogen sulfide + 3 NADP(+) + 3 H2O = sulfite + 3 NADPH + 4 H(+). The protein operates within sulfur metabolism; hydrogen sulfide biosynthesis; hydrogen sulfide from sulfite (NADPH route): step 1/1. Component of the sulfite reductase complex that catalyzes the 6-electron reduction of sulfite to sulfide. This is one of several activities required for the biosynthesis of L-cysteine from sulfate. The flavoprotein component catalyzes the electron flow from NADPH -&gt; FAD -&gt; FMN to the hemoprotein component. This Zymomonas mobilis subsp. mobilis (strain ATCC 31821 / ZM4 / CP4) protein is Sulfite reductase [NADPH] flavoprotein alpha-component.